The primary structure comprises 228 residues: Putative elongation factor Tu-like protein (228 aa).

In terms of domain architecture, tr-type G spans 6-212; it reads KPHINVGTIG…LPIREKDNPF (207 aa). The segment at 15-22 is G1; that stretch reads GHVDHGKT. Residues 59 to 63 form a G2 region; it reads GITIS. A G3 region spans residues 80–83; sequence DCPG. The interval 135 to 138 is G4; sequence NKCD. Residues 173–175 form a G5 region; sequence SAV.

The protein belongs to the TRAFAC class translation factor GTPase superfamily. Classic translation factor GTPase family. EF-Tu/EF-1A subfamily.

This chain is Putative elongation factor Tu-like protein, found in Ehrlichia ruminantium (strain Welgevonden).